Consider the following 2193-residue polypeptide: Genome polyprotein (2193 aa).

The disordered stretch occupies residues 1 to 23 (MGSQVSTQRSGSHENSNSASEGS). A lipid anchor (N-myristoyl glycine; by host) is attached at Gly-2. The Cytoplasmic portion of the chain corresponds to 2 to 1503 (GSQVSTQRSG…HLNRAVLVMQ (1502 aa)). The interval 566–588 (GDPIADMIDQTVNNQVNRSLTAL) is amphipathic alpha-helix. Active-site for protease 2A activity residues include His-883 and Asp-901. The Zn(2+) site is built by Cys-918 and Cys-920. The active-site For protease 2A activity is Cys-972. Cys-978 and His-980 together coordinate Zn(2+). The tract at residues 1112 to 1184 (SASWLKKFND…EQSAASQEDL (73 aa)) is membrane-binding. The oligomerization stretch occupies residues 1112–1250 (SASWLKKFND…SPGTGKSLAT (139 aa)). The RNA-binding stretch occupies residues 1133-1137 (SSKIS). The 159-residue stretch at 1216–1374 (EKRMNNYMQF…YKTDLGRLDA (159 aa)) folds into the SF3 helicase domain. An ATP-binding site is contributed by 1240–1247 (GSPGTGKS). Zn(2+) is bound by residues Cys-1381, Cys-1392, and Cys-1397. The C4-type; degenerate zinc finger occupies 1381-1397 (CTENNTANFKRCSPLVC). Residues 1424–1431 (EYNNRSAI) form an RNA-binding region. The oligomerization stretch occupies residues 1435–1440 (IEALFQ). An intramembrane segment occupies 1504-1519 (SIATVVAVVSLVYVIY). Over 1520–2193 (KLFAGFQGAY…NLRRNWLELF (674 aa)) the chain is Cytoplasmic. Position 1529 is an O-(5'-phospho-RNA)-tyrosine (Tyr-1529). One can recognise a Peptidase C3 domain in the interval 1549–1727 (GPSLDFALSL…FCAGLKRGYF (179 aa)). Active-site for protease 3C activity residues include His-1588, Glu-1619, and Cys-1695. In terms of domain architecture, RdRp catalytic spans 1958–2074 (GSLFAFDYSG…SYPFPIDCSE (117 aa)). Positions 1964 and 2060 each coordinate Mg(2+).

The protein belongs to the picornaviruses polyprotein family. In terms of assembly, interacts with capsid protein VP1 and capsid protein VP3 to form heterotrimeric protomers. Interacts with capsid protein VP0, and capsid protein VP3 to form heterotrimeric protomers. Five protomers subsequently associate to form pentamers which serve as building blocks for the capsid. Interacts with capsid protein VP2, capsid protein VP3 and capsid protein VP4 following cleavage of capsid protein VP0. As to quaternary structure, interacts with capsid protein VP1 and capsid protein VP3 in the mature capsid. In terms of assembly, interacts with capsid protein VP0 and capsid protein VP1 to form heterotrimeric protomers. Five protomers subsequently associate to form pentamers which serve as building blocks for the capsid. Interacts with capsid protein VP4 in the mature capsid. Interacts with protein 2C; this interaction may be important for virion morphogenesis. Interacts with capsid protein VP1 and capsid protein VP3. As to quaternary structure, homodimer. In terms of assembly, homohexamer; forms a hexameric ring structure with 6-fold symmetry characteristic of AAA+ ATPases. Interacts (via N-terminus) with host RTN3 (via reticulon domain); this interaction is important for viral replication. Interacts with capsid protein VP3; this interaction may be important for virion morphogenesis. Interacts with protein 3CD. As to quaternary structure, homodimer. Interacts with host GBF1. Interacts (via GOLD domain) with host ACBD3 (via GOLD domain); this interaction allows the formation of a viral protein 3A/ACBD3 heterotetramer with a 2:2 stoichiometry, which will stimulate the recruitment of host PI4KB in order to synthesize PI4P at the viral RNA replication sites. In terms of assembly, interacts with RNA-directed RNA polymerase. Interacts with host IFIH1/MDA5; this interaction inhibits host IFIH1. As to quaternary structure, protein 3CD: Interacts with protein 3AB and with RNA-directed RNA polymerase. In terms of assembly, interacts with Viral protein genome-linked and with protein 3CD. Mg(2+) is required as a cofactor. In terms of processing, specific enzymatic cleavages in vivo by the viral proteases yield processing intermediates and the mature proteins. Myristoylation is required for the formation of pentamers during virus assembly. Further assembly of 12 pentamers and a molecule of genomic RNA generates the provirion. Post-translationally, during virion maturation, immature virions are rendered infectious following cleavage of VP0 into VP4 and VP2. This maturation seems to be an autocatalytic event triggered by the presence of RNA in the capsid and it is followed by a conformational change infectious virion. In terms of processing, myristoylation is required during RNA encapsidation and formation of the mature virus particle. VPg is uridylylated by the polymerase into VPg-pUpU. This acts as a nucleotide-peptide primer for the genomic RNA replication.

It is found in the virion. The protein resides in the host cytoplasm. Its subcellular location is the host cytoplasmic vesicle membrane. The protein localises to the host nucleus. It catalyses the reaction a ribonucleoside 5'-triphosphate + H2O = a ribonucleoside 5'-diphosphate + phosphate + H(+). The enzyme catalyses Selective cleavage of Tyr-|-Gly bond in the picornavirus polyprotein.. It carries out the reaction RNA(n) + a ribonucleoside 5'-triphosphate = RNA(n+1) + diphosphate. The catalysed reaction is Selective cleavage of Gln-|-Gly bond in the poliovirus polyprotein. In other picornavirus reactions Glu may be substituted for Gln, and Ser or Thr for Gly.. With respect to regulation, replication or transcription is subject to high level of random mutations by the nucleotide analog ribavirin. Its function is as follows. Forms an icosahedral capsid of pseudo T=3 symmetry with capsid proteins VP2 and VP3. The capsid is 300 Angstroms in diameter, composed of 60 copies of each capsid protein and enclosing the viral positive strand RNA genome. Capsid protein VP1 mainly forms the vertices of the capsid. Capsid protein VP1 interacts with host cell receptor to provide virion attachment to target host cells. This attachment induces virion internalization. After binding to its receptor, the capsid undergoes conformational changes. Capsid protein VP1 N-terminus (that contains an amphipathic alpha-helix) and capsid protein VP4 are externalized. Together, they shape a pore in the host membrane through which viral genome is translocated to host cell cytoplasm. In terms of biological role, forms an icosahedral capsid of pseudo T=3 symmetry with capsid proteins VP2 and VP3. The capsid is 300 Angstroms in diameter, composed of 60 copies of each capsid protein and enclosing the viral positive strand RNA genome. Functionally, lies on the inner surface of the capsid shell. After binding to the host receptor, the capsid undergoes conformational changes. Capsid protein VP4 is released, Capsid protein VP1 N-terminus is externalized, and together, they shape a pore in the host membrane through which the viral genome is translocated into the host cell cytoplasm. Component of immature procapsids, which is cleaved into capsid proteins VP4 and VP2 after maturation. Allows the capsid to remain inactive before the maturation step. Its function is as follows. Cysteine protease that cleaves viral polyprotein and specific host proteins. It is responsible for the autocatalytic cleavage between the P1 and P2 regions, which is the first cleavage occurring in the polyprotein. Also cleaves the host translation initiation factor EIF4G1, in order to shut down the capped cellular mRNA translation. Inhibits the host nucleus-cytoplasm protein and RNA trafficking by cleaving host members of the nuclear pores. Counteracts stress granule formation probably by antagonizing its assembly or promoting its dissassembly. Cleaves and inhibits host IFIH1/MDA5, thereby inhibiting the type-I IFN production and the establishment of the antiviral state. Cleaves and inhibits host MAVS, thereby inhibiting the type-I IFN production and the establishment of the antiviral state. In terms of biological role, plays an essential role in the virus replication cycle by acting as a viroporin. Creates a pore in the host endoplasmic reticulum and as a consequence releases Ca2+ in the cytoplasm of infected cell. In turn, high levels of cytoplasmic calcium may trigger membrane trafficking and transport of viral ER-associated proteins to viroplasms, sites of viral genome replication. Functionally, induces and associates with structural rearrangements of intracellular membranes. Displays RNA-binding, nucleotide binding and NTPase activities. May play a role in virion morphogenesis and viral RNA encapsidation by interacting with the capsid protein VP3. Localizes the viral replication complex to the surface of membranous vesicles. Together with protein 3CD binds the Cis-Active RNA Element (CRE) which is involved in RNA synthesis initiation. Acts as a cofactor to stimulate the activity of 3D polymerase, maybe through a nucleid acid chaperone activity. Its function is as follows. Localizes the viral replication complex to the surface of membranous vesicles. It inhibits host cell endoplasmic reticulum-to-Golgi apparatus transport and causes the disassembly of the Golgi complex, possibly through GBF1 interaction. This would result in depletion of MHC, trail receptors and IFN receptors at the host cell surface. Plays an essential role in viral RNA replication by recruiting ACBD3 and PI4KB at the viral replication sites, thereby allowing the formation of the rearranged membranous structures where viral replication takes place. In terms of biological role, acts as a primer for viral RNA replication and remains covalently bound to viral genomic RNA. VPg is uridylylated prior to priming replication into VPg-pUpU. The oriI viral genomic sequence may act as a template for this. The VPg-pUpU is then used as primer on the genomic RNA poly(A) by the RNA-dependent RNA polymerase to replicate the viral genome. During genome replication, the VPg-RNA linkage is removed by the host TDP2, thereby accelerating replication. During the late stage of the replication cycle, host TDP2 is excluded from sites of viral RNA synthesis and encapsidation, allowing for the generation of progeny virions. Functionally, involved in the viral replication complex and viral polypeptide maturation. It exhibits protease activity with a specificity and catalytic efficiency that is different from protease 3C. Protein 3CD lacks polymerase activity. Protein 3CD binds to the 5'UTR of the viral genome. Major viral protease that mediates proteolytic processing of the polyprotein. Cleaves host EIF5B, contributing to host translation shutoff. Also cleaves host PABPC1, contributing to host translation shutoff. Binds and inhibits host IFIH1/MDA5, thereby inhibiting the type-I IFN production and the establishment of the antiviral state. Cleaves host MAP3K7/TAK1, resulting in inhibition of TRAF6-triggered NF-kappa-B induction. Cleaves host NLRP1, triggers host N-glycine-mediated degradation of the autoinhibitory NLRP1 N-terminal fragment. Its function is as follows. Replicates the viral genomic RNA on the surface of intracellular membranes. May form linear arrays of subunits that propagate along a strong head-to-tail interaction called interface-I. Covalently attaches UMP to a tyrosine of VPg, which is used to prime RNA synthesis. The positive stranded RNA genome is first replicated at virus induced membranous vesicles, creating a dsRNA genomic replication form. This dsRNA is then used as template to synthesize positive stranded RNA genomes. ss(+)RNA genomes are either translated, replicated or encapsidated. The protein is Genome polyprotein of Homo sapiens (Human).